The primary structure comprises 146 residues: Ribosome maturation factor RimP (146 aa).

Belongs to the RimP family.

The protein localises to the cytoplasm. In terms of biological role, required for maturation of 30S ribosomal subunits. The polypeptide is Ribosome maturation factor RimP (Helicobacter pylori (strain G27)).